The following is a 95-amino-acid chain: Large ribosomal subunit protein eL43 (95 aa).

The segment at 38 to 59 adopts a C4-type zinc-finger fold; that stretch reads CPDCGSEAVSREGTGIWQCGKC.

The protein belongs to the eukaryotic ribosomal protein eL43 family. The cofactor is Zn(2+).

The polypeptide is Large ribosomal subunit protein eL43 (Halobacterium salinarum (strain ATCC 29341 / DSM 671 / R1)).